The chain runs to 437 residues: Adenosylhomocysteinase (437 aa).

The substrate site is built by Thr-54, Asp-130, and Glu-155. 156 to 158 (TTT) serves as a coordination point for NAD(+). Substrate-binding residues include Lys-185 and Asp-189. NAD(+) contacts are provided by residues Asn-190, 219–224 (GYGDVG), Glu-242, Asn-277, 298–300 (IGH), and Asn-345.

It belongs to the adenosylhomocysteinase family. Homotetramer. The cofactor is NAD(+).

The protein resides in the cytoplasm. The enzyme catalyses S-adenosyl-L-homocysteine + H2O = L-homocysteine + adenosine. The protein operates within amino-acid biosynthesis; L-homocysteine biosynthesis; L-homocysteine from S-adenosyl-L-homocysteine: step 1/1. Its function is as follows. Adenosylhomocysteine is a competitive inhibitor of S-adenosyl-L-methionine-dependent methyl transferase reactions; therefore adenosylhomocysteinase may play a key role in the control of methylations via regulation of the intracellular concentration of adenosylhomocysteine. The chain is Adenosylhomocysteinase from Leishmania donovani.